Consider the following 294-residue polypeptide: Acetylglutamate kinase (294 aa).

Residues 63 to 64 (GG), Arg-85, and Asn-188 each bind substrate.

This sequence belongs to the acetylglutamate kinase family. ArgB subfamily.

Its subcellular location is the cytoplasm. The enzyme catalyses N-acetyl-L-glutamate + ATP = N-acetyl-L-glutamyl 5-phosphate + ADP. It functions in the pathway amino-acid biosynthesis; L-arginine biosynthesis; N(2)-acetyl-L-ornithine from L-glutamate: step 2/4. Its function is as follows. Catalyzes the ATP-dependent phosphorylation of N-acetyl-L-glutamate. The polypeptide is Acetylglutamate kinase (Methanococcus maripaludis (strain C7 / ATCC BAA-1331)).